The sequence spans 418 residues: MEIKQLVLNKAKEAKESSRFIAKASTDLKNKIIVRMADYLKQNKDELIKANRIDVENAQKKGISKALIDRLTLTEKRIDEMIKGLQEVVALPDPVGEITKMWLRPNGMQVGKMRVPIGVIGVIYEARPNVTVDVTGLCLKAGNSVVLRGGSEAINSNIALVKILKEALKDEGMHEGVVTYIDISQREAVLEMIKLEGIIDLIIPRGGEGLIRTVTENSRIPVLKHYKGVCHVFVDRDADLAMAEEICFNAKVQRPATCNAMETMLVDENIAKKFLPNMLKKFEDAGVELKGCLKTKKIYPKVKDVKEEDFYQEYLDLVLNVKVVKNIDEAIEHITKYGSAHSDSIVTKDYNKAMKFLKEVDSSAVFVNASTRLNDGYQFGLGAEIGISTDKIHARGPMGLEELTCTKFIVFGNGQIRQ.

Belongs to the gamma-glutamyl phosphate reductase family.

Its subcellular location is the cytoplasm. The catalysed reaction is L-glutamate 5-semialdehyde + phosphate + NADP(+) = L-glutamyl 5-phosphate + NADPH + H(+). It participates in amino-acid biosynthesis; L-proline biosynthesis; L-glutamate 5-semialdehyde from L-glutamate: step 2/2. Catalyzes the NADPH-dependent reduction of L-glutamate 5-phosphate into L-glutamate 5-semialdehyde and phosphate. The product spontaneously undergoes cyclization to form 1-pyrroline-5-carboxylate. The sequence is that of Gamma-glutamyl phosphate reductase from Thermodesulfovibrio yellowstonii (strain ATCC 51303 / DSM 11347 / YP87).